Here is a 428-residue protein sequence, read N- to C-terminus: CinA-like protein (428 aa).

Belongs to the CinA family.

The protein is CinA-like protein of Gemmatimonas aurantiaca (strain DSM 14586 / JCM 11422 / NBRC 100505 / T-27).